Reading from the N-terminus, the 250-residue chain is 2,5-dichloro-2,5-cyclohexadiene-1,4-diol dehydrogenase (250 aa).

Residue 9-34 (IIVTGGGSGIGRATVELLVASGANVA) coordinates NAD(+). S141 contacts substrate. Y154 acts as the Proton acceptor in catalysis.

This sequence belongs to the short-chain dehydrogenases/reductases (SDR) family.

It carries out the reaction 2,5-dichlorocyclohexa-2,5-dien-1,4-diol + NAD(+) = 2,5-dichlorohydroquinone + NADH + H(+). It functions in the pathway xenobiotic degradation; gamma-hexachlorocyclohexane degradation. Functionally, catalyzes the dehydrogenation of 2,5-dichloro-2,5-cyclohexadiene-1,4-diol (2,5-DDOL) to 2,5-dichlorohydroquinone (2,5-DCHQ), a step in the degradation of gamma-hexachlorocyclohexane (gamma-HCH or lindane). This chain is 2,5-dichloro-2,5-cyclohexadiene-1,4-diol dehydrogenase, found in Sphingobium indicum (strain DSM 16412 / CCM 7286 / MTCC 6364 / B90A).